The primary structure comprises 188 residues: ATP synthase subunit b 1 (188 aa).

A helical membrane pass occupies residues 35 to 55 (VHFSSHFFWLAISFGFFYLFI).

Belongs to the ATPase B chain family. As to quaternary structure, F-type ATPases have 2 components, F(1) - the catalytic core - and F(0) - the membrane proton channel. F(1) has five subunits: alpha(3), beta(3), gamma(1), delta(1), epsilon(1). F(0) has three main subunits: a(1), b(2) and c(10-14). The alpha and beta chains form an alternating ring which encloses part of the gamma chain. F(1) is attached to F(0) by a central stalk formed by the gamma and epsilon chains, while a peripheral stalk is formed by the delta and b chains.

The protein localises to the cell inner membrane. Functionally, f(1)F(0) ATP synthase produces ATP from ADP in the presence of a proton or sodium gradient. F-type ATPases consist of two structural domains, F(1) containing the extramembraneous catalytic core and F(0) containing the membrane proton channel, linked together by a central stalk and a peripheral stalk. During catalysis, ATP synthesis in the catalytic domain of F(1) is coupled via a rotary mechanism of the central stalk subunits to proton translocation. In terms of biological role, component of the F(0) channel, it forms part of the peripheral stalk, linking F(1) to F(0). This chain is ATP synthase subunit b 1, found in Bartonella tribocorum (strain CIP 105476 / IBS 506).